We begin with the raw amino-acid sequence, 219 residues long: MHRKGAIGIGTLIVFIAMVLVAAVAAGVIIGTAGYLQQKAQATGMQTTQEVSSGIKIINIYGYVNSSVPSNGTITKMAIFVSPNAGSGGISLSNVKIVLSDGKKLVVYNYSKGLLYDKQISDLFNDSIVTIWNNITDTTFGIAVINDSGNKMDKDYPNLEWGDTVALLLRTTVFETEDNRRGIGPGTRIVGKVIPEVGAAGVIDFTTPSTYNYRVMVLQ.

Positions 1-5 are excised as a propeptide; sequence MHRKG.

This sequence belongs to the archaeal flagellin family.

It is found in the archaeal flagellum. In terms of biological role, flagellin is the subunit protein which polymerizes to form the filaments of archaeal flagella. The sequence is that of Flagellin B4 (flaB4) from Pyrococcus abyssi (strain GE5 / Orsay).